Here is a 332-residue protein sequence, read N- to C-terminus: Cell division protein ZipA (332 aa).

Residues 1 to 6 (MMQDLR) lie on the Periplasmic side of the membrane. A helical membrane pass occupies residues 7 to 27 (LILIVVGAIAIIALLLHGLWT). Residues 28 to 332 (SRKERSSLFR…RIRDVLKANA (305 aa)) are Cytoplasmic-facing. The span at 40 to 51 (PVKRAKKARDET) shows a compositional bias: basic and acidic residues. The tract at residues 40 to 189 (PVKRAKKARD…VQPAPQQPAE (150 aa)) is disordered. The span at 76 to 88 (SFDSASVDSSSFD) shows a compositional bias: low complexity. Over residues 93–105 (AREDVRSEAKSPF) the composition is skewed to basic and acidic residues.

Belongs to the ZipA family. Interacts with FtsZ via their C-terminal domains.

It localises to the cell inner membrane. Essential cell division protein that stabilizes the FtsZ protofilaments by cross-linking them and that serves as a cytoplasmic membrane anchor for the Z ring. Also required for the recruitment to the septal ring of downstream cell division proteins. The sequence is that of Cell division protein ZipA from Pectobacterium atrosepticum (strain SCRI 1043 / ATCC BAA-672) (Erwinia carotovora subsp. atroseptica).